The chain runs to 100 residues: uncharacterized protein (100 aa).

The next 2 helical transmembrane spans lie at 50 to 70 (LLIF…FSLF) and 75 to 95 (DVFL…SPEV).

The protein resides in the membrane. This is an uncharacterized protein from Saccharomyces cerevisiae (strain ATCC 204508 / S288c) (Baker's yeast).